Here is a 502-residue protein sequence, read N- to C-terminus: ATP synthase subunit alpha (502 aa).

ATP is bound at residue Gly169–Thr176.

Belongs to the ATPase alpha/beta chains family. In terms of assembly, F-type ATPases have 2 components, CF(1) - the catalytic core - and CF(0) - the membrane proton channel. CF(1) has five subunits: alpha(3), beta(3), gamma(1), delta(1), epsilon(1). CF(0) has three main subunits: a(1), b(2) and c(9-12). The alpha and beta chains form an alternating ring which encloses part of the gamma chain. CF(1) is attached to CF(0) by a central stalk formed by the gamma and epsilon chains, while a peripheral stalk is formed by the delta and b chains.

The protein localises to the cell membrane. The catalysed reaction is ATP + H2O + 4 H(+)(in) = ADP + phosphate + 5 H(+)(out). Its function is as follows. Produces ATP from ADP in the presence of a proton gradient across the membrane. The alpha chain is a regulatory subunit. The protein is ATP synthase subunit alpha of Clostridium perfringens (strain SM101 / Type A).